Reading from the N-terminus, the 240-residue chain is Pathogenesis-related thaumatin-like protein 3.5 (240 aa).

The first 20 residues, 1–20, serve as a signal peptide directing secretion; the sequence is MASLRLATLAMMVLFGSCRA. Cystine bridges form between Cys-31-Cys-237, Cys-79-Cys-89, Cys-94-Cys-100, Cys-145-Cys-227, Cys-150-Cys-210, Cys-158-Cys-173, Cys-177-Cys-186, and Cys-187-Cys-197.

It belongs to the thaumatin family. In terms of tissue distribution, strongly expressed in pollen grains. Also present at weak levels in seedling roots, in sapling stems and in developing male strobili.

May be involved in disease resistance. In Cryptomeria japonica (Japanese cedar), this protein is Pathogenesis-related thaumatin-like protein 3.5.